The primary structure comprises 453 residues: Phosphoglucosamine mutase (453 aa).

Residue S110 is the Phosphoserine intermediate of the active site. Mg(2+) contacts are provided by S110, D247, D249, and D251. The residue at position 110 (S110) is a Phosphoserine.

This sequence belongs to the phosphohexose mutase family. The cofactor is Mg(2+). Activated by phosphorylation.

The catalysed reaction is alpha-D-glucosamine 1-phosphate = D-glucosamine 6-phosphate. Functionally, catalyzes the conversion of glucosamine-6-phosphate to glucosamine-1-phosphate. The chain is Phosphoglucosamine mutase from Tropheryma whipplei (strain TW08/27) (Whipple's bacillus).